The primary structure comprises 320 residues: Glucokinase (320 aa).

12-17 serves as a coordination point for ATP; that stretch reads GDIGGT.

This sequence belongs to the bacterial glucokinase family.

It localises to the cytoplasm. It catalyses the reaction D-glucose + ATP = D-glucose 6-phosphate + ADP + H(+). The protein is Glucokinase of Nitrobacter hamburgensis (strain DSM 10229 / NCIMB 13809 / X14).